A 148-amino-acid chain; its full sequence is Small ribosomal subunit protein uS7c (148 aa).

Belongs to the universal ribosomal protein uS7 family. Part of the 30S ribosomal subunit.

It is found in the plastid. The protein localises to the chloroplast. Functionally, one of the primary rRNA binding proteins, it binds directly to 16S rRNA where it nucleates assembly of the head domain of the 30S subunit. This is Small ribosomal subunit protein uS7c (rps7) from Cyanidioschyzon merolae (strain NIES-3377 / 10D) (Unicellular red alga).